The primary structure comprises 527 residues: Glucose transporter 1B/1C/1D/1F/2B (527 aa).

The interval 1–22 (MTERRDNVSHAPDAIEGPNDGA) is disordered. Residues 1–43 (MTERRDNVSHAPDAIEGPNDGAHAEDTSPGFFSLENLGVAQVQ) lie on the Cytoplasmic side of the membrane. Residues 44–64 (VVGGTLNGYVIGYVAVYLLLY) form a helical membrane-spanning segment. Topologically, residues 65 to 118 (LTATECKFTTEGACGGRKIYGCKWSGTTCKFENPKCSEGSDPSDSCKNEVAYTS) are extracellular. A helical membrane pass occupies residues 119–139 (VYSGIFACAMIVGSMVGSIIA). The Cytoplasmic segment spans residues 140 to 151 (GKCITTFGLKKS). A helical transmembrane segment spans residues 152 to 172 (FIIVSITCTIACVVVQVAIEY). The Extracellular portion of the chain corresponds to 173 to 175 (NNY). A helical membrane pass occupies residues 176 to 196 (YALCTGRVLIGLGVGILCSVF). The Cytoplasmic portion of the chain corresponds to 197-213 (PMYVNENAHPKLCKMDG). Residues 214–234 (VLFQVFTTLGIMLAAMLGLIL) form a helical membrane-spanning segment. At 235-249 (DKTGASKEEANMAGR) the chain is on the extracellular side. A helical transmembrane segment spans residues 250-270 (LHVFSAVPLGLSVAMFLVGMF). The Cytoplasmic portion of the chain corresponds to 271–299 (LRESTATFAQDDDGKADGGMDPNEYGWGQ). Residues 300 to 320 (MLWPLFMGAVTAGTLQLTGIN) traverse the membrane as a helical segment. The Extracellular segment spans residues 321 to 338 (AVMNYAPKITENLGMDPS). A helical transmembrane segment spans residues 339–359 (LGNFLVMAWNFVTSLVAIPLA). Over 360 to 372 (SRFTMRQMFITCS) the chain is Cytoplasmic. A helical transmembrane segment spans residues 373-393 (FVASCMCLFLCGIPVFPGVAG). The Extracellular portion of the chain corresponds to 394-403 (KEVKNGVATT). A helical membrane pass occupies residues 404-424 (GIALFIAAFEFGVGSCFFVLA). At 425 to 436 (QDLFPPSFRPKG) the chain is on the cytoplasmic side. Residues 437-457 (GSFVVMMQFIFNILINLLYPI) form a helical membrane-spanning segment. The Extracellular segment spans residues 458-475 (TTEAISGGATGNQDKGQA). The helical transmembrane segment at 476–496 (VAFILFGLIGLICSVLQFFYL) threads the bilayer. Topologically, residues 497-527 (YPYDANQDHENDHGGEPVEQKTYPVEASPRN) are cytoplasmic. The segment covering 506–515 (ENDHGGEPVE) has biased composition (basic and acidic residues). Residues 506–527 (ENDHGGEPVEQKTYPVEASPRN) form a disordered region.

The protein belongs to the major facilitator superfamily. Sugar transporter (TC 2.A.1.1) family.

The protein resides in the membrane. Facilitative glucose transporter. The chain is Glucose transporter 1B/1C/1D/1F/2B (THT1B) from Trypanosoma brucei brucei.